The following is a 197-amino-acid chain: Recombination protein RecR (197 aa).

The segment at 57 to 72 (CSVCFAITEDDPCWIC) adopts a C4-type zinc-finger fold. In terms of domain architecture, Toprim spans 79–174 (GTICVVEEPQ…KVTRLAHGIP (96 aa)).

It belongs to the RecR family.

In terms of biological role, may play a role in DNA repair. It seems to be involved in an RecBC-independent recombinational process of DNA repair. It may act with RecF and RecO. The polypeptide is Recombination protein RecR (Citrifermentans bemidjiense (strain ATCC BAA-1014 / DSM 16622 / JCM 12645 / Bem) (Geobacter bemidjiensis)).